Here is a 103-residue protein sequence, read N- to C-terminus: Large ribosomal subunit protein bL21 (103 aa).

It belongs to the bacterial ribosomal protein bL21 family. In terms of assembly, part of the 50S ribosomal subunit. Contacts protein L20.

This protein binds to 23S rRNA in the presence of protein L20. The protein is Large ribosomal subunit protein bL21 of Amoebophilus asiaticus (strain 5a2).